We begin with the raw amino-acid sequence, 367 residues long: Phosphoribosylaminoimidazole-succinocarboxamide synthase (367 aa).

It belongs to the SAICAR synthetase family.

The catalysed reaction is 5-amino-1-(5-phospho-D-ribosyl)imidazole-4-carboxylate + L-aspartate + ATP = (2S)-2-[5-amino-1-(5-phospho-beta-D-ribosyl)imidazole-4-carboxamido]succinate + ADP + phosphate + 2 H(+). It participates in purine metabolism; IMP biosynthesis via de novo pathway; 5-amino-1-(5-phospho-D-ribosyl)imidazole-4-carboxamide from 5-amino-1-(5-phospho-D-ribosyl)imidazole-4-carboxylate: step 1/2. The sequence is that of Phosphoribosylaminoimidazole-succinocarboxamide synthase from Shewanella sp. (strain MR-7).